The primary structure comprises 85 residues: MGGISIWQLLIIALIVVLLFGTKKLRSLGGDLGGAVKGFKNAMSSEEDKKALEDAEAAKPVQTAQTAQPTQQATEKKPESNKEQA.

The helical transmembrane segment at 1–21 threads the bilayer; sequence MGGISIWQLLIIALIVVLLFG. The segment at 43–85 is disordered; that stretch reads MSSEEDKKALEDAEAAKPVQTAQTAQPTQQATEKKPESNKEQA. The span at 46-57 shows a compositional bias: basic and acidic residues; it reads EEDKKALEDAEA. Residues 58–73 are compositionally biased toward low complexity; it reads AKPVQTAQTAQPTQQA. A compositionally biased stretch (basic and acidic residues) spans 74–85; that stretch reads TEKKPESNKEQA.

It belongs to the TatA/E family. In terms of assembly, the Tat system comprises two distinct complexes: a TatABC complex, containing multiple copies of TatA, TatB and TatC subunits, and a separate TatA complex, containing only TatA subunits. Substrates initially bind to the TatABC complex, which probably triggers association of the separate TatA complex to form the active translocon.

The protein localises to the cell inner membrane. Its function is as follows. Part of the twin-arginine translocation (Tat) system that transports large folded proteins containing a characteristic twin-arginine motif in their signal peptide across membranes. TatA could form the protein-conducting channel of the Tat system. This is Sec-independent protein translocase protein TatA from Shewanella sp. (strain MR-4).